We begin with the raw amino-acid sequence, 164 residues long: Probable metalloprotease y4qB (164 aa).

Residues 5–142 (IWIPESVVEA…WLPHAWIGQL (138 aa)) form the MPN domain. H89, H91, and D103 together coordinate Zn(2+).

This sequence belongs to the peptidase M67B family.

The chain is Probable metalloprotease y4qB from Sinorhizobium fredii (strain NBRC 101917 / NGR234).